The chain runs to 739 residues: Phosphoribosylformylglycinamidine synthase subunit PurL (739 aa).

His52 is an active-site residue. ATP-binding residues include Tyr55 and Lys94. Residue Glu96 coordinates Mg(2+). Residues 97–100 (SHNH) and Arg119 each bind substrate. The Proton acceptor role is filled by His98. Asp120 is a Mg(2+) binding site. Gln243 lines the substrate pocket. Asp273 contributes to the Mg(2+) binding site. 317 to 319 (ESQ) provides a ligand contact to substrate. Residues Asp500 and Gly537 each contribute to the ATP site. Mg(2+) is bound at residue Asn538. Position 540 (Ser540) interacts with substrate.

Belongs to the FGAMS family. In terms of assembly, monomer. Part of the FGAM synthase complex composed of 1 PurL, 1 PurQ and 2 PurS subunits.

It localises to the cytoplasm. The catalysed reaction is N(2)-formyl-N(1)-(5-phospho-beta-D-ribosyl)glycinamide + L-glutamine + ATP + H2O = 2-formamido-N(1)-(5-O-phospho-beta-D-ribosyl)acetamidine + L-glutamate + ADP + phosphate + H(+). It participates in purine metabolism; IMP biosynthesis via de novo pathway; 5-amino-1-(5-phospho-D-ribosyl)imidazole from N(2)-formyl-N(1)-(5-phospho-D-ribosyl)glycinamide: step 1/2. Part of the phosphoribosylformylglycinamidine synthase complex involved in the purines biosynthetic pathway. Catalyzes the ATP-dependent conversion of formylglycinamide ribonucleotide (FGAR) and glutamine to yield formylglycinamidine ribonucleotide (FGAM) and glutamate. The FGAM synthase complex is composed of three subunits. PurQ produces an ammonia molecule by converting glutamine to glutamate. PurL transfers the ammonia molecule to FGAR to form FGAM in an ATP-dependent manner. PurS interacts with PurQ and PurL and is thought to assist in the transfer of the ammonia molecule from PurQ to PurL. The protein is Phosphoribosylformylglycinamidine synthase subunit PurL of Enterococcus faecalis (strain ATCC 700802 / V583).